Reading from the N-terminus, the 318-residue chain is Transaldolase (318 aa).

K132 acts as the Schiff-base intermediate with substrate in catalysis.

This sequence belongs to the transaldolase family. Type 1 subfamily. Homodimer.

Its subcellular location is the cytoplasm. The enzyme catalyses D-sedoheptulose 7-phosphate + D-glyceraldehyde 3-phosphate = D-erythrose 4-phosphate + beta-D-fructose 6-phosphate. It participates in carbohydrate degradation; pentose phosphate pathway; D-glyceraldehyde 3-phosphate and beta-D-fructose 6-phosphate from D-ribose 5-phosphate and D-xylulose 5-phosphate (non-oxidative stage): step 2/3. Functionally, transaldolase is important for the balance of metabolites in the pentose-phosphate pathway. This is Transaldolase from Shewanella sp. (strain ANA-3).